Reading from the N-terminus, the 207-residue chain is Large ribosomal subunit protein uL4 (207 aa).

A disordered region spans residues 49-77; that stretch reads HAVKNRSAVRGGGKKPWRQKGTGRARQGS. A compositionally biased stretch (basic residues) spans 60 to 71; sequence GGKKPWRQKGTG.

The protein belongs to the universal ribosomal protein uL4 family. Part of the 50S ribosomal subunit.

One of the primary rRNA binding proteins, this protein initially binds near the 5'-end of the 23S rRNA. It is important during the early stages of 50S assembly. It makes multiple contacts with different domains of the 23S rRNA in the assembled 50S subunit and ribosome. In terms of biological role, forms part of the polypeptide exit tunnel. The sequence is that of Large ribosomal subunit protein uL4 from Levilactobacillus brevis (strain ATCC 367 / BCRC 12310 / CIP 105137 / JCM 1170 / LMG 11437 / NCIMB 947 / NCTC 947) (Lactobacillus brevis).